A 249-amino-acid chain; its full sequence is 5'-nucleotidase SurE (249 aa).

A divalent metal cation contacts are provided by Asp-8, Asp-9, Ser-39, and Asn-91.

Belongs to the SurE nucleotidase family. A divalent metal cation serves as cofactor.

It localises to the cytoplasm. The enzyme catalyses a ribonucleoside 5'-phosphate + H2O = a ribonucleoside + phosphate. Functionally, nucleotidase that shows phosphatase activity on nucleoside 5'-monophosphates. In Haemophilus influenzae (strain PittEE), this protein is 5'-nucleotidase SurE.